The sequence spans 150 residues: Large ribosomal subunit protein bL9 (150 aa).

This sequence belongs to the bacterial ribosomal protein bL9 family.

Binds to the 23S rRNA. This Ralstonia pickettii (strain 12J) protein is Large ribosomal subunit protein bL9.